A 413-amino-acid polypeptide reads, in one-letter code: Elongation factor 1-alpha (413 aa).

GTP is bound by residues 1–7 (HVDSGKS), 77–81 (DAPGH), and 139–142 (NKMD). Residues 1–228 (HVDSGKSTTT…DAILPPARPT (228 aa)) form the tr-type G domain. Residues glutamate 287 and glutamate 360 each carry the 5-glutamyl glycerylphosphorylethanolamine modification.

This sequence belongs to the TRAFAC class translation factor GTPase superfamily. Classic translation factor GTPase family. EF-Tu/EF-1A subfamily.

It localises to the cytoplasm. In terms of biological role, this protein promotes the GTP-dependent binding of aminoacyl-tRNA to the A-site of ribosomes during protein biosynthesis. In Heliocheilus albipunctella (Millet head miner), this protein is Elongation factor 1-alpha.